The primary structure comprises 152 residues: Protein IpgF (152 aa).

The first 17 residues, 1 to 17, serve as a signal peptide directing secretion; the sequence is MSRFVFILLCFIPYLGR.

This sequence belongs to the IagB/IpgF/P19 family.

The protein is Protein IpgF (ipgF) of Shigella sonnei.